The following is an 820-amino-acid chain: SART-1 family protein DOT2 (820 aa).

3 stretches are compositionally biased toward basic and acidic residues: residues 1–156, 210–219, and 426–445; these read MEVE…DNRG, EEKRNAEKQR, and LGSRKDGRRQAMKEEKERIE. Disordered regions lie at residues 1-177, 210-248, 420-445, 523-544, 564-617, 657-678, 729-748, and 762-820; these read MEVE…SALD, EEKRNAEKQRAQQLSRIFEEQDNLNQGENEDGEDGEHLS, GLGAEDLGSRKDGRRQAMKEEKERIE, SSTNQTTDDNTTTGDETQENTV, KPES…PDEN, KLVGIVDDDGGKESKDKESKDR, KLKQMKNSDTPSQSVQRMRE, and GHVK…RPKP. The residue at position 22 (S22) is a Phosphoserine. 3 coiled-coil regions span residues 58–120, 171–235, and 433–510; these read RDKE…EKEK, KEAS…NLNQ, and RRQA…KEEA. Low complexity predominate over residues 525 to 543; sequence TNQTTDDNTTTGDETQENT. The segment covering 582 to 591 has biased composition (basic and acidic residues); it reads VEVKEEHPDG. A compositionally biased stretch (acidic residues) spans 596–606; sequence NDTDMDAAEDS. Composition is skewed to basic and acidic residues over residues 607 to 617 and 665 to 678; these read SDTKEITPDEN and DGGKESKDKESKDR. Composition is skewed to polar residues over residues 733 to 744 and 767 to 776; these read MKNSDTPSQSVQ and GQTSDPQSGF. A compositionally biased stretch (basic and acidic residues) spans 792-807; it reads GDRKVEHFLGIKRKSE.

It belongs to the SNU66/SART1 family. As to expression, expressed in lateral root cap, columella, meristem and quiescent center (QC). Expressed in young leaves.

The protein localises to the nucleus. Its function is as follows. Plays a role in root, shoot and flower development. Probably required for normal root and shoot meristem organization and maintenance and the proper expression of PIN and PLT genes. Involved in leaf vasculature patterning. The sequence is that of SART-1 family protein DOT2 from Arabidopsis thaliana (Mouse-ear cress).